The sequence spans 62 residues: MARGNQREIARQKNMKKTQEISKGKRKEDSLTASQRKQRDSEIMQQKQKIANEKKSMQTTEK.

Basic and acidic residues-rich tracts occupy residues 1-30 (MARG…KEDS) and 50-62 (IANE…TTEK). The tract at residues 1 to 62 (MARGNQREIA…EKKSMQTTEK (62 aa)) is disordered.

Belongs to the SERF family. Interacts with SNCA; this interaction promotes the aggregation of SNCA. As to expression, expressed in brain (at protein level). Highly expressed in the testis.

The protein localises to the cytoplasm. It localises to the cytosol. It is found in the nucleus. Positive regulator of amyloid protein aggregation and proteotoxicity. Induces conformational changes in amyloid proteins, such as APP, HTT, and SNCA, driving them into compact formations preceding the formation of aggregates. This is Small EDRK-rich factor 1 (Serf1) from Mus musculus (Mouse).